A 192-amino-acid chain; its full sequence is Xanthine phosphoribosyltransferase 2 (192 aa).

Positions 20 and 27 each coordinate xanthine. 131 to 135 (ANACA) is a binding site for 5-phospho-alpha-D-ribose 1-diphosphate. Lysine 159 is a binding site for xanthine.

It belongs to the purine/pyrimidine phosphoribosyltransferase family. Xpt subfamily. Homodimer.

The protein resides in the cytoplasm. It catalyses the reaction XMP + diphosphate = xanthine + 5-phospho-alpha-D-ribose 1-diphosphate. The protein operates within purine metabolism; XMP biosynthesis via salvage pathway; XMP from xanthine: step 1/1. Functionally, converts the preformed base xanthine, a product of nucleic acid breakdown, to xanthosine 5'-monophosphate (XMP), so it can be reused for RNA or DNA synthesis. The chain is Xanthine phosphoribosyltransferase 2 from Clostridium perfringens (strain ATCC 13124 / DSM 756 / JCM 1290 / NCIMB 6125 / NCTC 8237 / Type A).